Consider the following 303-residue polypeptide: Ribosomal RNA small subunit methyltransferase H (303 aa).

S-adenosyl-L-methionine contacts are provided by residues 33–35 (GGH), Asp52, Phe79, Asp97, and Gln104.

It belongs to the methyltransferase superfamily. RsmH family.

Its subcellular location is the cytoplasm. It catalyses the reaction cytidine(1402) in 16S rRNA + S-adenosyl-L-methionine = N(4)-methylcytidine(1402) in 16S rRNA + S-adenosyl-L-homocysteine + H(+). Specifically methylates the N4 position of cytidine in position 1402 (C1402) of 16S rRNA. This is Ribosomal RNA small subunit methyltransferase H from Wolinella succinogenes (strain ATCC 29543 / DSM 1740 / CCUG 13145 / JCM 31913 / LMG 7466 / NCTC 11488 / FDC 602W) (Vibrio succinogenes).